Reading from the N-terminus, the 220-residue chain is Protein-L-isoaspartate O-methyltransferase (220 aa).

The active site involves Ser64.

It belongs to the methyltransferase superfamily. L-isoaspartyl/D-aspartyl protein methyltransferase family.

It is found in the cytoplasm. It carries out the reaction [protein]-L-isoaspartate + S-adenosyl-L-methionine = [protein]-L-isoaspartate alpha-methyl ester + S-adenosyl-L-homocysteine. In terms of biological role, catalyzes the methyl esterification of L-isoaspartyl residues in peptides and proteins that result from spontaneous decomposition of normal L-aspartyl and L-asparaginyl residues. It plays a role in the repair and/or degradation of damaged proteins. The protein is Protein-L-isoaspartate O-methyltransferase of Methanoculleus marisnigri (strain ATCC 35101 / DSM 1498 / JR1).